Consider the following 375-residue polypeptide: Succinyl-diaminopimelate desuccinylase (375 aa).

His66 lines the Zn(2+) pocket. Asp68 is an active-site residue. Residue Asp99 participates in Zn(2+) binding. The Proton acceptor role is filled by Glu133. The Zn(2+) site is built by Glu134, Glu162, and His348.

The protein belongs to the peptidase M20A family. DapE subfamily. In terms of assembly, homodimer. It depends on Zn(2+) as a cofactor. The cofactor is Co(2+).

The enzyme catalyses N-succinyl-(2S,6S)-2,6-diaminopimelate + H2O = (2S,6S)-2,6-diaminopimelate + succinate. The protein operates within amino-acid biosynthesis; L-lysine biosynthesis via DAP pathway; LL-2,6-diaminopimelate from (S)-tetrahydrodipicolinate (succinylase route): step 3/3. Its function is as follows. Catalyzes the hydrolysis of N-succinyl-L,L-diaminopimelic acid (SDAP), forming succinate and LL-2,6-diaminopimelate (DAP), an intermediate involved in the bacterial biosynthesis of lysine and meso-diaminopimelic acid, an essential component of bacterial cell walls. This Escherichia coli O157:H7 protein is Succinyl-diaminopimelate desuccinylase.